The primary structure comprises 228 residues: Phosphoglycolate phosphatase (228 aa).

Asp-12 (nucleophile) is an active-site residue. 3 residues coordinate Mg(2+): Asp-12, Asp-14, and Asp-177.

It belongs to the HAD-like hydrolase superfamily. CbbY/CbbZ/Gph/YieH family. The cofactor is Mg(2+).

The catalysed reaction is 2-phosphoglycolate + H2O = glycolate + phosphate. The protein operates within organic acid metabolism; glycolate biosynthesis; glycolate from 2-phosphoglycolate: step 1/1. Functionally, specifically catalyzes the dephosphorylation of 2-phosphoglycolate. Is involved in the dissimilation of the intracellular 2-phosphoglycolate formed during the DNA repair of 3'-phosphoglycolate ends, a major class of DNA lesions induced by oxidative stress. In Vibrio parahaemolyticus serotype O3:K6 (strain RIMD 2210633), this protein is Phosphoglycolate phosphatase.